Consider the following 467-residue polypeptide: Asparagine--tRNA ligase (467 aa).

It belongs to the class-II aminoacyl-tRNA synthetase family. In terms of assembly, homodimer.

The protein localises to the cytoplasm. It carries out the reaction tRNA(Asn) + L-asparagine + ATP = L-asparaginyl-tRNA(Asn) + AMP + diphosphate + H(+). The sequence is that of Asparagine--tRNA ligase from Mannheimia succiniciproducens (strain KCTC 0769BP / MBEL55E).